A 334-amino-acid polypeptide reads, in one-letter code: N-acetyl-gamma-glutamyl-phosphate reductase (334 aa).

Residue Cys154 is part of the active site.

This sequence belongs to the NAGSA dehydrogenase family. Type 1 subfamily.

Its subcellular location is the cytoplasm. It carries out the reaction N-acetyl-L-glutamate 5-semialdehyde + phosphate + NADP(+) = N-acetyl-L-glutamyl 5-phosphate + NADPH + H(+). The protein operates within amino-acid biosynthesis; L-arginine biosynthesis; N(2)-acetyl-L-ornithine from L-glutamate: step 3/4. Its function is as follows. Catalyzes the NADPH-dependent reduction of N-acetyl-5-glutamyl phosphate to yield N-acetyl-L-glutamate 5-semialdehyde. The sequence is that of N-acetyl-gamma-glutamyl-phosphate reductase from Salmonella typhi.